The sequence spans 183 residues: MKLLFPIFASLMLQYQVNTEFIGLRRCLMGLGRCRDHCNVDEKEIQKCKMKKCCVGPKVVKLIKNYLQYGTPNVLNEDVQEMLKPAKNSSAVIQRKHILSVLPQIKSTSFFANTNFVIIPNATPMNSATISTMTPGQITYTATSTKSNTKESRDSATASPPPAPPPPNILPTPSLELEEAEEQ.

The N-terminal stretch at 1-19 is a signal peptide; the sequence is MKLLFPIFASLMLQYQVNT. Intrachain disulfides connect Cys-27–Cys-53, Cys-34–Cys-48, and Cys-38–Cys-54. Residues 141–183 form a disordered region; that stretch reads TATSTKSNTKESRDSATASPPPAPPPPNILPTPSLELEEAEEQ. Residues 159–170 show a composition bias toward pro residues; that stretch reads SPPPAPPPPNIL.

This sequence belongs to the beta-defensin family.

The protein localises to the secreted. Has antibacterial activity. This Pan troglodytes (Chimpanzee) protein is Beta-defensin 129 (DEFB129).